We begin with the raw amino-acid sequence, 595 residues long: Indole-3-acetic acid-amido synthetase GH3.3 (595 aa).

The protein belongs to the IAA-amido conjugating enzyme family.

In terms of biological role, catalyzes the synthesis of indole-3-acetic acid (IAA)-amino acid conjugates, providing a mechanism for the plant to cope with the presence of excess auxin. Strongly reactive with Glu, Gln, Trp, Asp, Ala, Leu, Phe, Gly, Tyr, Met, Ile and Val. Little or no product formation with His, Ser, Thr, Arg, Lys, or Cys. Also active on pyruvic and butyric acid analogs of IAA, PAA and the synthetic auxin naphthaleneacetic acid (NAA). The two chlorinated synthetic auxin herbicides 2,4-D and 3,6-dichloro-o-anisic acid (dicamba) cannot be used as substrates. The polypeptide is Indole-3-acetic acid-amido synthetase GH3.3 (GH3.3) (Arabidopsis thaliana (Mouse-ear cress)).